The chain runs to 74 residues: Protein SlyX homolog (74 aa).

The protein belongs to the SlyX family.

In Neisseria meningitidis serogroup A / serotype 4A (strain DSM 15465 / Z2491), this protein is Protein SlyX homolog.